The chain runs to 210 residues: Urease accessory protein UreF (210 aa).

It belongs to the UreF family. As to quaternary structure, ureD, UreF and UreG form a complex that acts as a GTP-hydrolysis-dependent molecular chaperone, activating the urease apoprotein by helping to assemble the nickel containing metallocenter of UreC. The UreE protein probably delivers the nickel.

It localises to the cytoplasm. Functionally, required for maturation of urease via the functional incorporation of the urease nickel metallocenter. The chain is Urease accessory protein UreF from Cereibacter sphaeroides (strain ATCC 17023 / DSM 158 / JCM 6121 / CCUG 31486 / LMG 2827 / NBRC 12203 / NCIMB 8253 / ATH 2.4.1.) (Rhodobacter sphaeroides).